We begin with the raw amino-acid sequence, 168 residues long: Phosphopantetheine adenylyltransferase (168 aa).

A substrate-binding site is contributed by T10. ATP is bound by residues 10 to 11 (TF) and H18. K42, L74, and R88 together coordinate substrate. ATP contacts are provided by residues 89–91 (GLR), E99, and 124–130 (NSFISST).

This sequence belongs to the bacterial CoaD family. Homohexamer. It depends on Mg(2+) as a cofactor.

It localises to the cytoplasm. It catalyses the reaction (R)-4'-phosphopantetheine + ATP + H(+) = 3'-dephospho-CoA + diphosphate. The protein operates within cofactor biosynthesis; coenzyme A biosynthesis; CoA from (R)-pantothenate: step 4/5. Its function is as follows. Reversibly transfers an adenylyl group from ATP to 4'-phosphopantetheine, yielding dephospho-CoA (dPCoA) and pyrophosphate. The sequence is that of Phosphopantetheine adenylyltransferase from Shewanella denitrificans (strain OS217 / ATCC BAA-1090 / DSM 15013).